Consider the following 382-residue polypeptide: F-box protein At3g27290 (382 aa).

The F-box domain occupies 16–105; sequence RKLELGLGEF…VDQMLFETLS (90 aa).

The polypeptide is F-box protein At3g27290 (Arabidopsis thaliana (Mouse-ear cress)).